A 275-amino-acid chain; its full sequence is Elongation factor Ts (275 aa).

Positions 76 to 79 (TDFV) are involved in Mg(2+) ion dislocation from EF-Tu.

It belongs to the EF-Ts family.

The protein resides in the cytoplasm. Its function is as follows. Associates with the EF-Tu.GDP complex and induces the exchange of GDP to GTP. It remains bound to the aminoacyl-tRNA.EF-Tu.GTP complex up to the GTP hydrolysis stage on the ribosome. This is Elongation factor Ts from Corynebacterium glutamicum (strain ATCC 13032 / DSM 20300 / JCM 1318 / BCRC 11384 / CCUG 27702 / LMG 3730 / NBRC 12168 / NCIMB 10025 / NRRL B-2784 / 534).